The sequence spans 319 residues: ATP-dependent 6-phosphofructokinase (319 aa).

Glycine 11 provides a ligand contact to ATP. Residue 21–25 (RAVVR) coordinates ADP. ATP is bound by residues 72-73 (RC) and 102-105 (GEGS). Glutamate 103 lines the Mg(2+) pocket. 126-128 (TID) contacts substrate. Aspartate 128 (proton acceptor) is an active-site residue. Residue lysine 155 participates in ADP binding. Substrate contacts are provided by residues arginine 163 and 170–172 (MGR). ADP-binding positions include 186–188 (GAE), arginine 212, and 214–216 (KIN). Residues glutamate 223, arginine 244, and 250-253 (HVQR) contribute to the substrate site.

It belongs to the phosphofructokinase type A (PFKA) family. ATP-dependent PFK group I subfamily. Prokaryotic clade 'B1' sub-subfamily. In terms of assembly, homotetramer. The cofactor is Mg(2+).

It is found in the cytoplasm. It carries out the reaction beta-D-fructose 6-phosphate + ATP = beta-D-fructose 1,6-bisphosphate + ADP + H(+). It participates in carbohydrate degradation; glycolysis; D-glyceraldehyde 3-phosphate and glycerone phosphate from D-glucose: step 3/4. Allosterically activated by ADP and other diphosphonucleosides, and allosterically inhibited by phosphoenolpyruvate. Functionally, catalyzes the phosphorylation of D-fructose 6-phosphate to fructose 1,6-bisphosphate by ATP, the first committing step of glycolysis. This is ATP-dependent 6-phosphofructokinase from Thermotoga neapolitana (strain ATCC 49049 / DSM 4359 / NBRC 107923 / NS-E).